The chain runs to 480 residues: Sestrin-2 (480 aa).

M1 is modified (N-acetylmethionine). The segment at 20 to 45 (PGGVGDSGPGEEQRESRARRGPRGPS) is disordered. The interval 66–239 (GLEALMSSGR…APTPPSEQSS (174 aa)) is N-terminal domain; mediates the alkylhydroperoxide reductase activity. The Cysteine sulfenic acid (-SOH) intermediate role is filled by C125. A Glycyl lysine isopeptide (Lys-Gly) (interchain with G-Cter in ubiquitin) cross-link involves residue K175. Residues 222–252 (ADGSPAPQAPTPPSEQSSPPSRDPLNNSGGF) are disordered. Position 249 is a phosphoserine (S249). A C-terminal domain; mediates TORC1 regulation region spans residues 308–480 (PHPDMLCFVE…ALRAITRYMT (173 aa)). L-leucine contacts are provided by residues 374–377 (TYNT), T386, and E451.

It belongs to the sestrin family. In terms of assembly, interacts with the GATOR2 complex which is composed of MIOS, SEC13, SEH1L, WDR24 and WDR59; the interaction is negatively regulated by leucine. Conveys leucine availability via direct interaction with SEH1L and WDR24 components of the GATOR2 complex. Interacts with RRAGA, RRAGB, RRAGC and RRAGD; may function as a guanine nucleotide dissociation inhibitor for RRAGs and regulate them. May interact with the TORC2 complex. Interacts with KEAP1, RBX1, SQSTM and ULK1; to regulate the degradation of KEAP1. May also associate with the complex composed of TSC1, TSC2 and the AMP-responsive protein kinase/AMPK to regulate TORC1 signaling. May interact with PRDX1. Post-translationally, phosphorylated by ULK1 at multiple sites. Ubiquitinated at Lys-175 by RNF167 via 'Lys-63'-linked polyubiquitination in response to leucine deprivation: ubiquitination promotes SESN2-interaction with the GATOR2 complex, leading to inhibit the TORC1 signaling pathway. Deubiquitinated at Lys-175 by STAMBPL1, promoting the TORC1 signaling pathway. Ubiquitinated by RNF186; ubiquitination mediates proteasomal degradation.

The protein resides in the cytoplasm. The catalysed reaction is a hydroperoxide + L-cysteinyl-[protein] = S-hydroxy-L-cysteinyl-[protein] + an alcohol. Functionally, functions as an intracellular leucine sensor that negatively regulates the mTORC1 signaling pathway through the GATOR complex. In absence of leucine, binds the GATOR subcomplex GATOR2 and prevents mTORC1 signaling. Binding of leucine to SESN2 disrupts its interaction with GATOR2 thereby activating the TORC1 signaling pathway. This stress-inducible metabolic regulator also plays a role in protection against oxidative and genotoxic stresses. May negatively regulate protein translation in response to endoplasmic reticulum stress, via mTORC1. May positively regulate the transcription by NFE2L2 of genes involved in the response to oxidative stress by facilitating the SQSTM1-mediated autophagic degradation of KEAP1. May also mediate TP53 inhibition of TORC1 signaling upon genotoxic stress. Moreover, may prevent the accumulation of reactive oxygen species (ROS) through the alkylhydroperoxide reductase activity born by the N-terminal domain of the protein. Was originally reported to contribute to oxidative stress resistance by reducing PRDX1. However, this could not be confirmed. The polypeptide is Sestrin-2 (Pongo abelii (Sumatran orangutan)).